Consider the following 151-residue polypeptide: Dehydrin Rab16D (151 aa).

A disordered region spans residues 1 to 138; the sequence is MEYQGQHGGH…TADAGGEKKG (138 aa). Residues 39–51 are compositionally biased toward basic and acidic residues; it reads EPAREDKKTDGVL. Low complexity-rich tracts occupy residues 90-105 and 117-132; these read GNNQ…TTTG and IATG…TADA.

It belongs to the plant dehydrin family.

The polypeptide is Dehydrin Rab16D (RAB16D) (Oryza sativa subsp. indica (Rice)).